The chain runs to 130 residues: Small ribosomal subunit protein uS8 (130 aa).

The protein belongs to the universal ribosomal protein uS8 family. Part of the 30S ribosomal subunit.

Functionally, one of the primary rRNA binding proteins, it binds directly to 16S rRNA central domain where it helps coordinate assembly of the platform of the 30S subunit. The sequence is that of Small ribosomal subunit protein uS8 from Methanopyrus kandleri (strain AV19 / DSM 6324 / JCM 9639 / NBRC 100938).